We begin with the raw amino-acid sequence, 125 residues long: DNA-directed RNA polymerase subunit omega (125 aa).

The protein belongs to the RNA polymerase subunit omega family. As to quaternary structure, the RNAP catalytic core consists of 2 alpha, 1 beta, 1 beta' and 1 omega subunit. When a sigma factor is associated with the core the holoenzyme is formed, which can initiate transcription.

It catalyses the reaction RNA(n) + a ribonucleoside 5'-triphosphate = RNA(n+1) + diphosphate. Functionally, promotes RNA polymerase assembly. Latches the N- and C-terminal regions of the beta' subunit thereby facilitating its interaction with the beta and alpha subunits. The polypeptide is DNA-directed RNA polymerase subunit omega (Zymomonas mobilis subsp. mobilis (strain ATCC 31821 / ZM4 / CP4)).